Reading from the N-terminus, the 321-residue chain is Peptidase 1 (321 aa).

A signal peptide spans 1 to 18 (MKIILAIASLLVLSAVYA). A propeptide spanning residues 19–98 (RPASIKTFEE…LKTQFDLNAE (80 aa)) is cleaved from the precursor. Residue asparagine 34 is glycosylated (N-linked (GlcNAc...) asparagine). A disulfide bridge connects residues cysteine 130 and cysteine 170. Cysteine 133 is a catalytic residue. N-linked (GlcNAc...) asparagine glycosylation occurs at asparagine 151. Residues histidine 269 and asparagine 289 contribute to the active site.

This sequence belongs to the peptidase C1 family.

Its subcellular location is the secreted. The enzyme catalyses Broad endopeptidase specificity.. Functionally, probable thiol protease. This is Peptidase 1 (EURM1) from Euroglyphus maynei (Mayne's house dust mite).